The primary structure comprises 205 residues: Holliday junction branch migration complex subunit RuvA (205 aa).

Positions 1–64 (MIGKLKGTID…EDQLKLFGFL (64 aa)) are domain I. The domain II stretch occupies residues 65 to 143 (SALEREWFRL…AFSGEMAPSI (79 aa)). The tract at residues 144–153 (GLKQELGEGV) is flexible linker. The segment at 153–205 (VAAAPVADAVSALTNLGYSRDQAANAVAAALKNGGEGGDSAKLIRLGLKELSR) is domain III.

Belongs to the RuvA family. Homotetramer. Forms an RuvA(8)-RuvB(12)-Holliday junction (HJ) complex. HJ DNA is sandwiched between 2 RuvA tetramers; dsDNA enters through RuvA and exits via RuvB. An RuvB hexamer assembles on each DNA strand where it exits the tetramer. Each RuvB hexamer is contacted by two RuvA subunits (via domain III) on 2 adjacent RuvB subunits; this complex drives branch migration. In the full resolvosome a probable DNA-RuvA(4)-RuvB(12)-RuvC(2) complex forms which resolves the HJ.

It localises to the cytoplasm. Functionally, the RuvA-RuvB-RuvC complex processes Holliday junction (HJ) DNA during genetic recombination and DNA repair, while the RuvA-RuvB complex plays an important role in the rescue of blocked DNA replication forks via replication fork reversal (RFR). RuvA specifically binds to HJ cruciform DNA, conferring on it an open structure. The RuvB hexamer acts as an ATP-dependent pump, pulling dsDNA into and through the RuvAB complex. HJ branch migration allows RuvC to scan DNA until it finds its consensus sequence, where it cleaves and resolves the cruciform DNA. The chain is Holliday junction branch migration complex subunit RuvA from Rhizobium meliloti (strain 1021) (Ensifer meliloti).